Consider the following 389-residue polypeptide: Chalcone synthase 3 (389 aa).

Cys164 is a catalytic residue.

The protein belongs to the thiolase-like superfamily. Chalcone/stilbene synthases family.

The catalysed reaction is (E)-4-coumaroyl-CoA + 3 malonyl-CoA + 3 H(+) = 2',4,4',6'-tetrahydroxychalcone + 3 CO2 + 4 CoA. The protein operates within secondary metabolite biosynthesis; flavonoid biosynthesis. The primary product of this enzyme is 4,2',4',6'-tetrahydroxychalcone (also termed naringenin-chalcone or chalcone) which can under specific conditions spontaneously isomerize into naringenin. This Camellia sinensis (Tea plant) protein is Chalcone synthase 3 (CHS3).